Here is a 297-residue protein sequence, read N- to C-terminus: Protease HtpX homolog (297 aa).

A run of 2 helical transmembrane segments spans residues 5–25 and 43–63; these read IFLFILTNLLVITTIGIVLTI and LMALLVFSLVVGFVGSFISLG. His154 provides a ligand contact to Zn(2+). Glu155 is a catalytic residue. His158 contributes to the Zn(2+) binding site. The next 2 helical transmembrane spans lie at 169–189 and 203–223; these read LLQGIVNTFVVFLSRIAAWVA and FIAMIVFQIIFSILGSLVVFA. Glu229 lines the Zn(2+) pocket.

Belongs to the peptidase M48B family. It depends on Zn(2+) as a cofactor.

Its subcellular location is the cell membrane. The sequence is that of Protease HtpX homolog from Bacillus velezensis (strain DSM 23117 / BGSC 10A6 / LMG 26770 / FZB42) (Bacillus amyloliquefaciens subsp. plantarum).